The chain runs to 590 residues: NADH-ubiquinone oxidoreductase chain 5 (590 aa).

The next 18 helical transmembrane spans lie at 1-21 (MFLI…SFMF), 28-48 (FWLS…SFLM), 58-78 (YYDF…TYVC), 81-101 (FYMF…FYAF), 113-133 (FLII…SYDF), 136-156 (AYCG…YFWY), 176-198 (VLLI…TFYF), 245-265 (ALIH…FVYW), 273-293 (YFYN…LCVF), 310-330 (ISFS…LFFC), 333-353 (MFYK…FFGL), 372-392 (LLLI…GFYC), 395-415 (MLLA…LFIS), 428-450 (FLLF…FLLF), 461-481 (ISLY…CIFV), 501-521 (IAIF…GCLF), 536-556 (IFFV…YFVC), and 568-588 (FVIY…LWIL).

It belongs to the complex I subunit 5 family.

Its subcellular location is the mitochondrion inner membrane. The catalysed reaction is a ubiquinone + NADH + 5 H(+)(in) = a ubiquinol + NAD(+) + 4 H(+)(out). In terms of biological role, core subunit of the mitochondrial membrane respiratory chain NADH dehydrogenase (Complex I) that is believed to belong to the minimal assembly required for catalysis. Complex I functions in the transfer of electrons from NADH to the respiratory chain. The immediate electron acceptor for the enzyme is believed to be ubiquinone. This chain is NADH-ubiquinone oxidoreductase chain 5 (ND5), found in Trypanosoma brucei brucei.